A 482-amino-acid polypeptide reads, in one-letter code: E3 ubiquitin-protein ligase parkin (482 aa).

The region spanning 30-99 (LSIYVKTNTG…LGQQSVLHAI (70 aa)) is the Ubiquitin-like domain. A Phosphoserine; by Pink1 modification is found at Ser-94. Residues 157 to 246 (AHFFVHCSQC…SGGEKDFAAP (90 aa)) form an RING-type 0; atypical zinc finger. Positions 163, 166, 178, and 181 each coordinate Zn(2+). Thr-187 carries the phosphothreonine; by Pink1 modification. Zn(2+) contacts are provided by Cys-208, Cys-232, His-235, Cys-259, Cys-262, Cys-274, His-278, Cys-281, Cys-284, Cys-310, Cys-314, Cys-353, Cys-358, Cys-373, Cys-377, Cys-382, Cys-385, His-390, Cys-394, Cys-436, and Cys-439. A TRIAD supradomain region spans residues 255-482 (KNVPCLACTD…RDCMGAHWFG (228 aa)). An RING-type 1 zinc finger spans residues 259–314 (CLACTDVSDTVLVFPCASQHVTCIDCFRHYCRSRLGERQFMPHPDFGYTLPCPAGC). 2 IBR-type zinc fingers span residues 334–394 (DRYQ…IGEC) and 432–473 (STKP…EWTR). Residues 436–467 (CPKCRTPTERDGGCMHMVCTRAGCGFEWCWVC) form an RING-type 2; atypical zinc finger. Cys-449 is an active-site residue. Residues Cys-454, Cys-459, Cys-464, Cys-467, Cys-475, and His-479 each contribute to the Zn(2+) site.

The protein belongs to the RBR family. Parkin subfamily. Forms an E3 ubiquitin ligase complex with E2 ubiquitin-conjugating enzymes. Interacts with Pink1. Interacts with Marf. Interacts with Paris. Interacts with septins Septin1 and pnut. In terms of processing, auto-ubiquitinates in an E2-dependent manner leading to its own degradation. Post-translationally, phosphorylated. Activation requires phosphorylation at Ser-94 by Pink1 and binding to Pink1-phosphorylated polyubiquitin chains. Phosphorylation at Thr-187 by Pink1 is also important for mitochondrial localization. As to expression, in oocytes, accumulates in early egg chambers where it is enriched until stages 9-10, localizing mainly to the posterior pole and anterior margin (at protein level). After stage 10 it is no longer detected in the oocyte (at protein level). In embryos, ubiquitously expressed in the early stages (stages 2 to 5) (at protein level). Expression levels decrease at later stages and becomes restricted to the brain and nerve cord from stage 9 (at protein level). Relatively higher levels of expression in the head compared to the body. Enriched in the dorsomedial (DM) dopaminergic neurons.

It is found in the mitochondrion. Its subcellular location is the cytoplasm. The protein resides in the cytosol. It catalyses the reaction [E2 ubiquitin-conjugating enzyme]-S-ubiquitinyl-L-cysteine + [acceptor protein]-L-lysine = [E2 ubiquitin-conjugating enzyme]-L-cysteine + [acceptor protein]-N(6)-ubiquitinyl-L-lysine.. The protein operates within protein modification; protein ubiquitination. Its activity is regulated as follows. In the autoinhibited state the side chain of Phe-481 inserts into a hydrophobic groove in RING-0, occluding the ubiquitin acceptor site Cys-449, whereas the REP repressor element binds RING-1 and blocks its E2-binding site. Activation of park requires 2 steps: (1) phosphorylation at Ser-94 by Pink1 and (2) binding to phosphorylated ubiquitin, leading to unlock repression of the catalytic Cys-449 by the RING-0 region via an allosteric mechanism and converting park to its fully-active form. According to another report, phosphorylation at Ser-94 by Pink1 is not essential for activation and only binding to phosphorylated ubiquitin is essential to unlock repression. E3 ubiquitin-protein ligase which accepts ubiquitin from E2 ubiquitin-conjugating enzymes in the form of a thioester and then directly transfers the ubiquitin to targeted substrates, such as Paris, Marf, Opa1, Miro, pnut, Septin1, Tom20 and porin. Mediates monoubiquitination as well as 'Lys-6', 'Lys-11', 'Lys-48'-linked and 'Lys-63'-linked polyubiquitination of substrates, depending on the context. Protects against mitochondrial dysfunction during cellular stress, by acting downstream of Pink1, to coordinate mitochondrial quality control mechanisms that remove and replace dysfunctional mitochondrial components. Depending on the severity of mitochondrial damage and/or dysfunction, activity ranges from preventing apoptosis and stimulating mitochondrial biogenesis to regulating mitochondrial dynamics and eliminating severely damaged mitochondria via mitophagy. Appears to be particularly important in maintaining the physiology and function of cells with high energy demands that are undergoing stress or altered metabolic environment, including spermatids, muscle cells and neurons such as the dopaminergic (DA) neurons. Activation and recruitment onto the outer membrane of damaged/dysfunctional mitochondria (OMM) requires Pink1-mediated phosphorylation of both park and ubiquitin. In depolarized mitochondria, mediates the decision between mitophagy or preventing apoptosis by inducing either the poly- or monoubiquitination of porin/VDAC; polyubiquitination of porin promotes mitophagy, while monoubiquitination of porin decreases mitochondrial calcium influx which ultimately inhibits apoptosis. When cellular stress results in irreversible mitochondrial damage, promotes the autophagic degradation of dysfunctional depolarized mitochondria (mitophagy) by promoting the ubiquitination of mitochondrial proteins. Preferentially assembles 'Lys-6'-, 'Lys-11'- and 'Lys-63'-linked polyubiquitin chains following mitochondrial damage, leading to mitophagy. In developing tissues, inhibits JNK-mediated apoptosis by negatively regulating bsk transcription. The Pink1-park pathway also promotes fission and/or inhibits fusion of damaged mitochondria by mediating the ubiquitination and subsequent degradation of proteins involved in mitochondrial fusion/fission such as Marf, Opa1 and fzo. This prevents the refusion of unhealthy mitochondria with the healthy mitochondrial network and/or initiates mitochondrial fragmentation facilitating their later engulfment by autophagosomes. Regulates motility of damaged mitochondria by phosphorylating Miro which likely promotes its park-dependent degradation by the proteasome; in motor neurons, this inhibits mitochondrial intracellular anterograde transport along the axons which probably increases the chance of the mitochondria being eliminated in the soma. The Pink1-park pathway is also involved in mitochondrial regeneration processes such as promoting mitochondrial biogenesis, activating localized mitochondrial repair, promoting selective turnover of mitochondrial proteins and initiating the mitochondrial import of endogenous proteins. Involved in mitochondrial biogenesis via the ubiquitination of transcriptional repressor Paris which leads to its subsequent proteasomal degradation and allows activation of the transcription factor srl. Promotes localized mitochondrial repair by activating the translation of specific nuclear-encoded mitochondrial RNAs (nc-mtRNAs) on the mitochondrial surface, including several key electron transport chain component nc-mtRNAs. This is E3 ubiquitin-protein ligase parkin from Drosophila melanogaster (Fruit fly).